Consider the following 274-residue polypeptide: Prolyl 4-hydroxylase 13 (274 aa).

The Cytoplasmic segment spans residues 1-10; the sequence is MRSYGKEKKL. A helical; Signal-anchor for type II membrane protein membrane pass occupies residues 11-31; that stretch reads VFPYVFIACCFFLAIFGFCFF. Topologically, residues 32-274 are lumenal; that stretch reads NLFSQGISFS…TKWIRDQTYD (243 aa). The 120-residue stretch at 151 to 270 folds into the Fe2OG dioxygenase domain; sequence YYESFNILRY…KWVATKWIRD (120 aa). The Fe cation site is built by His-169 and Asp-171. The N-linked (GlcNAc...) asparagine glycan is linked to Asn-242. His-251 lines the Fe cation pocket. Lys-261 contributes to the 2-oxoglutarate binding site.

This sequence belongs to the P4HA family. It depends on Fe(2+) as a cofactor. L-ascorbate is required as a cofactor. In terms of tissue distribution, expressed in epidermal root hair cells (trichoblasts) root hairless cells (atrichoblasts).

The protein localises to the endoplasmic reticulum membrane. It catalyses the reaction L-prolyl-[collagen] + 2-oxoglutarate + O2 = trans-4-hydroxy-L-prolyl-[collagen] + succinate + CO2. Catalyzes the post-translational formation of 4-hydroxyproline in -Xaa-Pro-Gly- sequences in proline-rich peptide sequences of plant glycoproteins and other proteins. Hydroxyprolines are important constituent of many plant cell wall glycoproteins such as extensins, hydroxyproline-rich glycoproteins, lectins and arabinogalactan proteins. Possesses high affinity for leucine-rich repeat and proline-rich extensins of root cell walls that are essential for root hair development. Hydroxyprolines define the subsequent O-glycosylation sites by arabinosyltransferases which elongate the O-arabinosides on extensins. The protein is Prolyl 4-hydroxylase 13 of Arabidopsis thaliana (Mouse-ear cress).